The chain runs to 374 residues: uncharacterized protein (374 aa).

The span at 1–13 (METKYHEYDDVQT) shows a compositional bias: basic and acidic residues. Disordered regions lie at residues 1-20 (METK…PSNK), 91-193 (SPMT…PLNQ), and 236-374 (KINN…SDFE). The span at 95–155 (NNNNNNNNNN…NNSSNNNNNN (61 aa)) shows a compositional bias: low complexity. Residues 166 to 193 (ISSNQSSPLSIYSTPPNPSSYVSSPLNQ) are compositionally biased toward polar residues. Over residues 242-262 (APPPPPKACAPPPPPPPPPPI) the composition is skewed to pro residues. Low complexity predominate over residues 277 to 300 (NNNNNNNNNNNSSNTNDSNNTNNT).

This is an uncharacterized protein from Dictyostelium discoideum (Social amoeba).